The primary structure comprises 383 residues: Oxysterol-binding protein-related protein 4B (383 aa).

This sequence belongs to the OSBP family. Expressed in stems and flowers.

In terms of biological role, may be involved in the transport of sterols. This Arabidopsis thaliana (Mouse-ear cress) protein is Oxysterol-binding protein-related protein 4B (ORP4B).